Consider the following 212-residue polypeptide: Actin-depolymerizing factor 1, isoforms a/b (212 aa).

One can recognise an ADF-H domain in the interval 3–159 (SGVMVDPDVQ…SHKELLNNCP (157 aa)).

It belongs to the actin-binding proteins ADF family. As to quaternary structure, interacts with F-actin.

Depolymerizes growing actin filaments in muscle cells; required for the assembly of actin filaments into the functional contractile myofilament lattice of muscle. Competes with unc-87 for actin binding and inhibits the actin-bundling activity of unc-87. This is Actin-depolymerizing factor 1, isoforms a/b from Caenorhabditis elegans.